The following is a 276-amino-acid chain: Golgi apparatus membrane protein TVP23 homolog C (276 aa).

Position 1 is an N-acetylmethionine (methionine 1). Residues 1–21 (MLQQDSNDDTEDVSLFDAEEE) form a disordered region. Transmembrane regions (helical) follow at residues 52–72 (LLCE…ILLL) and 126–146 (IFWL…FSAL). Residues 254–276 (GESPNSRGTGEPGPKFHLASGMH) are disordered.

This sequence belongs to the TVP23 family.

The protein localises to the membrane. The chain is Golgi apparatus membrane protein TVP23 homolog C (TVP23C) from Homo sapiens (Human).